Here is a 335-residue protein sequence, read N- to C-terminus: Glycerol-3-phosphate dehydrogenase [NAD(P)+] (335 aa).

NADPH is bound by residues serine 10, phenylalanine 11, arginine 31, and lysine 105. Sn-glycerol 3-phosphate is bound by residues lysine 105, glycine 136, and serine 138. Alanine 140 contributes to the NADPH binding site. Residues lysine 191, aspartate 244, serine 254, arginine 255, and asparagine 256 each contribute to the sn-glycerol 3-phosphate site. Lysine 191 serves as the catalytic Proton acceptor. Residue arginine 255 coordinates NADPH. NADPH contacts are provided by valine 279 and glutamate 281.

It belongs to the NAD-dependent glycerol-3-phosphate dehydrogenase family.

The protein localises to the cytoplasm. The catalysed reaction is sn-glycerol 3-phosphate + NAD(+) = dihydroxyacetone phosphate + NADH + H(+). It catalyses the reaction sn-glycerol 3-phosphate + NADP(+) = dihydroxyacetone phosphate + NADPH + H(+). Its pathway is membrane lipid metabolism; glycerophospholipid metabolism. Catalyzes the reduction of the glycolytic intermediate dihydroxyacetone phosphate (DHAP) to sn-glycerol 3-phosphate (G3P), the key precursor for phospholipid synthesis. The polypeptide is Glycerol-3-phosphate dehydrogenase [NAD(P)+] (Leptospira interrogans serogroup Icterohaemorrhagiae serovar Lai (strain 56601)).